A 289-amino-acid chain; its full sequence is Trimeric intracellular cation channel type B (289 aa).

The Lumenal segment spans residues 1-18 (MDVFAFFNLNELAFGLSK). Residues 19–36 (LPMFPYFDMAHYIISVMS) form a helical membrane-spanning segment. Residues 37–49 (LREQPGALCVSQR) are Cytoplasmic-facing. The chain crosses the membrane as a helical span at residues 50-73 (SPLACWFSSMLYCFGGAVLSALML). Residues 74-85 (ADAPVAPLSNTT) are Lumenal-facing. Residues 86–103 (NLLLATLMWYLVFYCPLD) form a helical membrane-spanning segment. Residues 104 to 107 (VVYS) are Cytoplasmic-facing. A helical transmembrane segment spans residues 108 to 125 (LASLLPLRLVLTAMKEVT). A 1,2-diacyl-sn-glycero-3-phospho-(1D-myo-inositol-4,5-bisphosphate) is bound by residues lysine 122 and arginine 126. Residues 126-144 (RTWKVLSGVSQAGSKYSDA) lie on the Lumenal side of the membrane. Residues 145 to 162 (LFVMVAVGWAKGAGGGLI) traverse the membrane as a helical segment. Topologically, residues 163-183 (SNFEQLVRGVWKPETNELLKM) are cytoplasmic. The chain crosses the membrane as a helical span at residues 184-201 (SYPTKVTLLGAVVFSLQQ). Residues 202 to 210 (CRYLPIQTH) lie on the Lumenal side of the membrane. Residues 211 to 230 (HLTFIYTLFTVTNKTRMMLL) form a helical membrane-spanning segment. Over 231-289 (GSSSHPLSSLESFLYKTLFVRPLTDLSAEHTHSKHNGSVPEPTTAQTHTKEAEASKKTN) the chain is Cytoplasmic. The interval 260–289 (HTHSKHNGSVPEPTTAQTHTKEAEASKKTN) is disordered. The segment covering 278-289 (HTKEAEASKKTN) has biased composition (basic and acidic residues).

The protein belongs to the TMEM38 family. Homotrimer; conformation seems to be controled by binding to diacylglycerol (DAG).

The protein resides in the endoplasmic reticulum membrane. It carries out the reaction K(+)(in) = K(+)(out). Its activity is regulated as follows. Channel activity is activated by increased cytosolic Ca(2+) levels and blocked by luminal high Ca(2+) levels. Functionally, intracellular monovalent cation channel required for maintenance of rapid intracellular calcium release. Acts as a potassium counter-ion channel that functions in synchronization with calcium release from intracellular stores. Activated by increased cytosolic Ca(2+) levels. The chain is Trimeric intracellular cation channel type B (tmem38b) from Danio rerio (Zebrafish).